The primary structure comprises 70 residues: Large ribosomal subunit protein eL38 (70 aa).

It belongs to the eukaryotic ribosomal protein eL38 family.

The protein is Large ribosomal subunit protein eL38 (RpL38) of Julodis onopordi (Jewel beetle).